We begin with the raw amino-acid sequence, 237 residues long: Probable septum site-determining protein MinC (237 aa).

The protein belongs to the MinC family. As to quaternary structure, interacts with MinD and FtsZ.

In terms of biological role, cell division inhibitor that blocks the formation of polar Z ring septums. Rapidly oscillates between the poles of the cell to destabilize FtsZ filaments that have formed before they mature into polar Z rings. Prevents FtsZ polymerization. This chain is Probable septum site-determining protein MinC, found in Buchnera aphidicola subsp. Acyrthosiphon pisum (strain 5A).